A 161-amino-acid chain; its full sequence is Nucleotide-binding protein RC1_3464 (161 aa).

It belongs to the YajQ family.

In terms of biological role, nucleotide-binding protein. This chain is Nucleotide-binding protein RC1_3464, found in Rhodospirillum centenum (strain ATCC 51521 / SW).